Consider the following 89-residue polypeptide: Large ribosomal subunit protein bL27 (89 aa).

The interval 1-21 is disordered; sequence MAHKKGASSSRNGRDSNAQRL. Residues 7–19 are compositionally biased toward polar residues; it reads ASSSRNGRDSNAQ.

This sequence belongs to the bacterial ribosomal protein bL27 family.

The chain is Large ribosomal subunit protein bL27 from Frankia alni (strain DSM 45986 / CECT 9034 / ACN14a).